The primary structure comprises 116 residues: Phosphoribosyl-ATP pyrophosphatase (116 aa).

The protein belongs to the PRA-PH family.

Its subcellular location is the cytoplasm. The enzyme catalyses 1-(5-phospho-beta-D-ribosyl)-ATP + H2O = 1-(5-phospho-beta-D-ribosyl)-5'-AMP + diphosphate + H(+). It participates in amino-acid biosynthesis; L-histidine biosynthesis; L-histidine from 5-phospho-alpha-D-ribose 1-diphosphate: step 2/9. In Nitrobacter winogradskyi (strain ATCC 25391 / DSM 10237 / CIP 104748 / NCIMB 11846 / Nb-255), this protein is Phosphoribosyl-ATP pyrophosphatase.